The chain runs to 274 residues: Protein STAY-GREEN, chloroplastic (274 aa).

The N-terminal 48 residues, 1 to 48 (MAAATSTMSLIPPITQQQRWHAADSLVVLASRRHDSRRRRRCRYVVPR), are a transit peptide targeting the chloroplast.

The protein belongs to the staygreen family.

The protein resides in the plastid. It localises to the chloroplast. Functionally, involved in the disassembling mechanism of the intact light-harvesting complex of photosystem II (LHCPII) in the thylakoid membranes. Required to trigger chlorophyll degradation during natural and dark-induced leaf senescence. This Oryza sativa subsp. indica (Rice) protein is Protein STAY-GREEN, chloroplastic (SGR).